A 246-amino-acid chain; its full sequence is Transcription factor A, mitochondrial (246 aa).

The transit peptide at 1 to 42 (MALLRGVWGVLNALGKSGADLCAGCGSRLRYPFSFAYVPKWF) directs the protein to the mitochondrion. Positions 50–118 (PKKPMTSYVR…VYKEEINRIQ (69 aa)) form a DNA-binding region, HMG box 1. 2 positions are modified to phosphoserine; by PKA: S56 and S61. Position 122 is a phosphothreonine (T122). Residues 155 to 219 (PKRPRSAYNI…RYYNEMKSWE (65 aa)) constitute a DNA-binding region (HMG box 2). S160 bears the Phosphoserine; by PKA mark. S193 and S195 each carry phosphoserine.

Monomer; binds DNA as a monomer. Homodimer. Component of the mitochondrial transcription initiation complex, composed at least of TFB2M, TFAM and POLRMT. In this complex TFAM recruits POLRMT to the promoter whereas TFB2M induces structural changes in POLRMT to enable promoter opening and trapping of the DNA non-template strand. Upon metabolic stress, forms a complex composed of FOXO3, SIRT3, TFAM and POLRMT. Interacts with TFB1M and TFB2M. Interacts with CLPX; this enhances DNA-binding. In terms of processing, phosphorylation by PKA within the HMG box 1 impairs DNA binding and promotes degradation by the AAA+ Lon protease.

It is found in the mitochondrion. The protein localises to the mitochondrion matrix. It localises to the mitochondrion nucleoid. Functionally, binds to the mitochondrial light strand promoter and functions in mitochondrial transcription regulation. Component of the mitochondrial transcription initiation complex, composed at least of TFB2M, TFAM and POLRMT that is required for basal transcription of mitochondrial DNA. In this complex, TFAM recruits POLRMT to a specific promoter whereas TFB2M induces structural changes in POLRMT to enable promoter opening and trapping of the DNA non-template strand. Required for accurate and efficient promoter recognition by the mitochondrial RNA polymerase. Promotes transcription initiation from the HSP1 and the light strand promoter by binding immediately upstream of transcriptional start sites. Is able to unwind DNA. Bends the mitochondrial light strand promoter DNA into a U-turn shape via its HMG boxes. Required for maintenance of normal levels of mitochondrial DNA. May play a role in organizing and compacting mitochondrial DNA. This Bos taurus (Bovine) protein is Transcription factor A, mitochondrial.